The following is a 151-amino-acid chain: Aspartate carbamoyltransferase regulatory chain (151 aa).

Positions 108, 113, 138, and 141 each coordinate Zn(2+).

Belongs to the PyrI family. As to quaternary structure, contains catalytic and regulatory chains. It depends on Zn(2+) as a cofactor.

Involved in allosteric regulation of aspartate carbamoyltransferase. This is Aspartate carbamoyltransferase regulatory chain from Pyrobaculum islandicum (strain DSM 4184 / JCM 9189 / GEO3).